Here is a 438-residue protein sequence, read N- to C-terminus: Carboxypeptidase A6 (438 aa).

A signal peptide spans 1–30 (MNFLGNPRSHTAAFLPVCWLLLNILKPGHC). Positions 31–129 (HSYDNRYAGD…NSLQTQRNRR (99 aa)) are cleaved as a propeptide — activation peptide. N89 and N153 each carry an N-linked (GlcNAc...) asparagine glycan. The 296-residue stretch at 138–433 (VYHSLEDIQS…LAVKNITMHL (296 aa)) folds into the Peptidase M14 domain. Zn(2+)-binding residues include H197 and E200. Substrate is bound by residues 197–200 (HARE), R255, and 272–273 (NR). A disulfide bond links C266 and C289. A Zn(2+)-binding site is contributed by H325. 326–327 (AY) contributes to the substrate binding site. An N-linked (GlcNAc...) asparagine glycan is attached at N344. Y377 contributes to the substrate binding site. The Proton donor/acceptor role is filled by E399. Residue N428 is glycosylated (N-linked (GlcNAc...) asparagine).

The protein belongs to the peptidase M14 family. Requires Zn(2+) as cofactor. In terms of tissue distribution, in brain, highly expressed in the olfactory bulb with lower levels in other regions including cerebral cortex, hippocampus, hypothalamus, striatum and medulla. Within the olfactory bulb, highest levels occur in the mitral and granular layers with lower levels in the internal and external plexiform layers. Moderate levels are found in the epididymis with low levels in colon and spleen. Not detected in adrenal, liver, lung, ovary or testis. At embryonic day 14.5, enriched in eye, ear, osteoblasts, stomach, skin, dorsal root ganglia and throughout the CNS.

Its subcellular location is the secreted. The protein resides in the extracellular space. It localises to the extracellular matrix. Its function is as follows. May be involved in the proteolytic inactivation of enkephalins and neurotensin in some brain areas. May convert inactive angiotensin I into the biologically active angiotensin II. Releases a C-terminal amino acid, with preference for large hydrophobic C-terminal amino acids and shows only very weak activity toward small amino acids and histidine. The chain is Carboxypeptidase A6 (Cpa6) from Mus musculus (Mouse).